Consider the following 57-residue polypeptide: Aspartyl-phosphate phosphatase YnzD (57 aa).

This sequence belongs to the spo0E family.

Functionally, aspartyl-phosphate phosphatase which specifically dephosphorylates the sporulation transcription factor Spo0A-P and negatively regulates the sporulation initiation pathway in order to control the proper timing of sporulation. The chain is Aspartyl-phosphate phosphatase YnzD (ynzD) from Bacillus subtilis (strain 168).